The chain runs to 47 residues: Photosystem II reaction center protein K (47 aa).

Positions 1-10 (MAPLTLDLLA) are excised as a propeptide. The helical transmembrane segment at 26-46 (LPLIPLLFFLLVFVWQAAVGF) threads the bilayer.

The protein belongs to the PsbK family. In terms of assembly, PSII is composed of 1 copy each of membrane proteins PsbA, PsbB, PsbC, PsbD, PsbE, PsbF, PsbH, PsbI, PsbJ, PsbK, PsbL, PsbM, PsbT, PsbX, PsbY, Psb30/Ycf12, peripheral proteins PsbO, CyanoQ (PsbQ), PsbU, PsbV and a large number of cofactors. It forms dimeric complexes.

It is found in the cellular thylakoid membrane. Functionally, one of the components of the core complex of photosystem II (PSII). PSII is a light-driven water:plastoquinone oxidoreductase that uses light energy to abstract electrons from H(2)O, generating O(2) and a proton gradient subsequently used for ATP formation. It consists of a core antenna complex that captures photons, and an electron transfer chain that converts photonic excitation into a charge separation. This chain is Photosystem II reaction center protein K, found in Prochlorococcus marinus (strain SARG / CCMP1375 / SS120).